A 620-amino-acid chain; its full sequence is 1-deoxy-D-xylulose-5-phosphate synthase (620 aa).

Residues histidine 75 and 116 to 118 (AHS) each bind thiamine diphosphate. Aspartate 147 is a binding site for Mg(2+). Residues 148–149 (GA), asparagine 177, tyrosine 284, and glutamate 366 each bind thiamine diphosphate. Asparagine 177 contributes to the Mg(2+) binding site.

This sequence belongs to the transketolase family. DXPS subfamily. Homodimer. The cofactor is Mg(2+). Thiamine diphosphate serves as cofactor.

It carries out the reaction D-glyceraldehyde 3-phosphate + pyruvate + H(+) = 1-deoxy-D-xylulose 5-phosphate + CO2. The protein operates within metabolic intermediate biosynthesis; 1-deoxy-D-xylulose 5-phosphate biosynthesis; 1-deoxy-D-xylulose 5-phosphate from D-glyceraldehyde 3-phosphate and pyruvate: step 1/1. Its function is as follows. Catalyzes the acyloin condensation reaction between C atoms 2 and 3 of pyruvate and glyceraldehyde 3-phosphate to yield 1-deoxy-D-xylulose-5-phosphate (DXP). This is 1-deoxy-D-xylulose-5-phosphate synthase from Bordetella avium (strain 197N).